Here is a 403-residue protein sequence, read N- to C-terminus: Argininosuccinate synthase (403 aa).

Residues 10–18 (AYSGGVDTS) and Ala-38 contribute to the ATP site. Tyr-89 is a binding site for L-citrulline. Residue Gly-119 coordinates ATP. Residues Thr-121, Asn-125, and Asp-126 each coordinate L-aspartate. Asn-125 is a binding site for L-citrulline. The L-citrulline site is built by Arg-129, Ser-177, Ser-186, Glu-262, and Tyr-274.

It belongs to the argininosuccinate synthase family. Type 1 subfamily. In terms of assembly, homotetramer.

Its subcellular location is the cytoplasm. It catalyses the reaction L-citrulline + L-aspartate + ATP = 2-(N(omega)-L-arginino)succinate + AMP + diphosphate + H(+). It functions in the pathway amino-acid biosynthesis; L-arginine biosynthesis; L-arginine from L-ornithine and carbamoyl phosphate: step 2/3. The chain is Argininosuccinate synthase from Synechococcus sp. (strain CC9902).